The chain runs to 106 residues: Iron-sulfur cluster assembly protein CyaY (106 aa).

It belongs to the frataxin family.

Functionally, involved in iron-sulfur (Fe-S) cluster assembly. May act as a regulator of Fe-S biogenesis. The sequence is that of Iron-sulfur cluster assembly protein CyaY from Salmonella newport (strain SL254).